We begin with the raw amino-acid sequence, 121 residues long: Large ribosomal subunit protein uL18 (121 aa).

Belongs to the universal ribosomal protein uL18 family. Part of the 50S ribosomal subunit; part of the 5S rRNA/L5/L18/L25 subcomplex. Contacts the 5S and 23S rRNAs.

Functionally, this is one of the proteins that bind and probably mediate the attachment of the 5S RNA into the large ribosomal subunit, where it forms part of the central protuberance. The protein is Large ribosomal subunit protein uL18 of Streptococcus suis (strain 98HAH33).